We begin with the raw amino-acid sequence, 332 residues long: Hdr-like menaquinol oxidoreductase cytochrome b-like subunit (332 aa).

Transmembrane regions (helical) follow at residues 3-23, 97-117, 143-163, 177-197, and 230-250; these read GVIF…IGVI, DARW…LVLI, VFIP…FLLW, LPSD…GNVM, and IEPI…YFPF.

In terms of assembly, consists of five subunits: an integral membrane subunit, a cytochrome b-like subunit, a cytochrome c subunit and two iron-sulfur subunits.

Its subcellular location is the cell membrane. Its function is as follows. Has menaquinol-oxidizing activity. HmeC and HmeD subunits may together mediate electron transfer from menaquinol to an unidentified electron acceptor on the cytoplasmic side of the membrane. This is Hdr-like menaquinol oxidoreductase cytochrome b-like subunit (hmeC) from Archaeoglobus fulgidus (strain ATCC 49558 / DSM 4304 / JCM 9628 / NBRC 100126 / VC-16).